The following is a 1013-amino-acid chain: Polyprotein of EF-Ts, chloroplastic (1013 aa).

A chloroplast-targeting transit peptide spans 1–43 (MLRELGRTATVKAHGRSVLRPVRGPAGRRQVAFTGVRPSVRVF). An S1 motif 1 domain is found at 64-133 (GSEYEGTVTT…EKKRVSLELK (70 aa)). Acidic residues predominate over residues 141–150 (SAEESDDIIT). The segment at 141 to 163 (SAEESDDIITEPDREGADATDDD) is disordered. In terms of domain architecture, S1 motif 2 spans 227–331 (MEEVTGKVAR…DGRGISLTHF (105 aa)). Residues 772–798 (QAKAAAPAAPKKEEPKKEEPKKATVAV) are disordered. Over residues 781-793 (PKKEEPKKEEPKK) the composition is skewed to basic and acidic residues.

It belongs to the EF-Ts family. In terms of assembly, component of the chloroplast ribosome 30S and 70S subunits, as well as polysomes. Component of the chloroplast ribosome 70S subunit, and at low levels, present in polysomes. As to quaternary structure, associates transiently with chloroplast polysomes.

It localises to the plastid. Its subcellular location is the chloroplast. Functionally, associates with the EF-Tu.GDP complex and induces the exchange of GDP to GTP. It remains bound to the aminoacyl-tRNA.EF-Tu.GTP complex up to the GTP hydrolysis stage on the ribosome. Its function is as follows. Binds to psbD and psbA mRNAs 5'-untranslated regions (UTRs) in vitro. This chain is Polyprotein of EF-Ts, chloroplastic, found in Chlamydomonas reinhardtii (Chlamydomonas smithii).